An 87-amino-acid polypeptide reads, in one-letter code: MSERLPQRREVHPEERVRNIWERERDTWQWTSIRVPEEILQRWLAMLRSGRNRNKVYREMQKWMSIHPKAPVIRPCGCRLCNPGWET.

The short motif at 40-47 (LQRWLAML) is the Nuclear export signal element. Positions 48 to 55 (RSGRNRNK) match the Nuclear localization signal motif.

It localises to the virion. It is found in the host nucleus. Functionally, seems to function as a Vpr-like protein, since it mediates host cell cycle arrest in G2 phase. Cell cycle arrest creates a favorable environment for maximizing viral expression and production. This is Probable Vpr-like protein (tat) from Caprine arthritis encephalitis virus (strain 63) (CAEV-63).